Reading from the N-terminus, the 607-residue chain is DNA mismatch repair protein MutL (607 aa).

Belongs to the DNA mismatch repair MutL/HexB family.

Functionally, this protein is involved in the repair of mismatches in DNA. It is required for dam-dependent methyl-directed DNA mismatch repair. May act as a 'molecular matchmaker', a protein that promotes the formation of a stable complex between two or more DNA-binding proteins in an ATP-dependent manner without itself being part of a final effector complex. The chain is DNA mismatch repair protein MutL from Anaeromyxobacter sp. (strain K).